We begin with the raw amino-acid sequence, 952 residues long: DNA topoisomerase 1 (952 aa).

Residues 12 to 135 (RRLVIVESPA…VKRMVFHEIT (124 aa)) enclose the Toprim domain. Glutamate 18 and aspartate 104 together coordinate Mg(2+). In terms of domain architecture, Topo IA-type catalytic spans 150 to 602 (NQKLVDAQET…RFYFGEGDGT (453 aa)). The interaction with DNA stretch occupies residues 184 to 189 (SAGRVQ). The active-site O-(5'-phospho-DNA)-tyrosine intermediate is tyrosine 334. The interval 847–952 (RFGPYVTDGE…KATASKTSED (106 aa)) is disordered. Residues 871 to 884 (TPERGYELLAEKRA) show a composition bias toward basic and acidic residues. Over residues 885-906 (KGPAKKTAKKAVKKTAAKKAPA) the composition is skewed to basic residues. 2 stretches are compositionally biased toward low complexity: residues 907-930 (KKAA…AAKS) and 937-952 (AKTA…TSED).

Belongs to the type IA topoisomerase family. In terms of assembly, monomer. It depends on Mg(2+) as a cofactor.

It carries out the reaction ATP-independent breakage of single-stranded DNA, followed by passage and rejoining.. In terms of biological role, releases the supercoiling and torsional tension of DNA, which is introduced during the DNA replication and transcription, by transiently cleaving and rejoining one strand of the DNA duplex. Introduces a single-strand break via transesterification at a target site in duplex DNA. The scissile phosphodiester is attacked by the catalytic tyrosine of the enzyme, resulting in the formation of a DNA-(5'-phosphotyrosyl)-enzyme intermediate and the expulsion of a 3'-OH DNA strand. The free DNA strand then undergoes passage around the unbroken strand, thus removing DNA supercoils. Finally, in the religation step, the DNA 3'-OH attacks the covalent intermediate to expel the active-site tyrosine and restore the DNA phosphodiester backbone. Its function is as follows. Relaxes supercoiled plasmid in vitro; in the presence of sIHF (integration host factor) relaxation is decreased. This Streptomyces coelicolor (strain ATCC BAA-471 / A3(2) / M145) protein is DNA topoisomerase 1.